The chain runs to 86 residues: Weak neurotoxin 6 (86 aa).

The signal sequence occupies residues 1–21 (MKTLLLTLVVVTIVCLDLGYT). Disulfide bonds link cysteine 24-cysteine 45, cysteine 27-cysteine 32, cysteine 38-cysteine 63, cysteine 67-cysteine 78, and cysteine 79-cysteine 84.

The protein belongs to the three-finger toxin family. Ancestral subfamily. Orphan group II sub-subfamily. Expressed by the venom gland.

It is found in the secreted. Its function is as follows. Binds with low affinity to muscular (alpha-1-beta-1-delta-epsilon/CHRNA1-CHRNB1-CHRND-CHRNE) and very low affinity to neuronal (alpha-7/CHRNA7) nicotinic acetylcholine receptor (nAChR). This is Weak neurotoxin 6 from Naja sputatrix (Malayan spitting cobra).